An 840-amino-acid chain; its full sequence is Lysine-specific demethylase JMJ27 (840 aa).

The span at 1–10 (MEKMRGKRIR) shows a compositional bias: basic residues. Residues 1-52 (MEKMRGKRIRPRDSGELVEDGRSESERKTRKKENDVVSKGRIGRGRGRGEVS) form a disordered region. The segment covering 11-38 (PRDSGELVEDGRSESERKTRKKENDVVS) has biased composition (basic and acidic residues). Residues Cys-80, Cys-83, Cys-95, Cys-98, Cys-104, Cys-107, Cys-124, and Cys-127 each coordinate Zn(2+). The RING-type; degenerate zinc-finger motif lies at 80 to 127 (CHHCKILTSESDLIFCSKCNKKCYCFDCIKRSYSERTHEEVRAACPFC). The JmjC domain occupies 502 to 798 (PKSGILNLAT…ECLRLTQEFR (297 aa)). Fe cation contacts are provided by His-546 and Asp-548. A disordered region spans residues 594 to 678 (KEASELENKS…ETDGNTNERS (85 aa)). Residues 595-620 (EASELENKSMKEVDESKKDLKDKAAN) are compositionally biased toward basic and acidic residues. Residues 621–631 (EEQSNNSSRPS) are compositionally biased toward polar residues. Over residues 635–646 (EAEKVIISKEDN) the composition is skewed to basic and acidic residues. The segment covering 647 to 659 (PTQPAVSTSVESI) has biased composition (polar residues). The segment covering 660–678 (QEQKLDAPKETDGNTNERS) has biased composition (basic and acidic residues). Residue His-766 coordinates Fe cation.

It belongs to the JARID1 histone demethylase family. In terms of assembly, interacts with RPN1A. Requires Fe(2+) as cofactor. In terms of tissue distribution, expressed in seedlings, inflorescences, flowers and siliques, and, at low levels, in roots, leaves (including vascular bundles) and stems. Particularly observed in stomatal guard cells.

The protein localises to the nucleus. Its subcellular location is the cytoplasm. The enzyme catalyses N(6),N(6)-dimethyl-L-lysyl(9)-[histone H3] + 2-oxoglutarate + O2 = N(6)-methyl-L-lysyl(9)-[histone H3] + formaldehyde + succinate + CO2. It carries out the reaction N(6)-methyl-L-lysyl(9)-[histone H3] + 2-oxoglutarate + O2 = L-lysyl(9)-[histone H3] + formaldehyde + succinate + CO2. It catalyses the reaction N(6),N(6)-dimethyl-L-lysyl(9)-[histone H3] + 2 2-oxoglutarate + 2 O2 = L-lysyl(9)-[histone H3] + 2 formaldehyde + 2 succinate + 2 CO2. In terms of biological role, histone demethylase that demethylates 'Lys-9' (H3K9me) of histone H3 with a specific activity for H3K9me1 and H3K9me2. No activity on H3K4, H3K27, H3K36, H3R2 and H4R3 methyl marks, but weak activity on H3K9me3. Involved in regulation of gene expression. Regulates flowering time by repressing the major flowering regulator CONSTANS (CO) and promoting FLOWERING LOCUS C (FLC). Exhibits a positive impact on abscisic acid- (ABA), hydrogen peroxide- (H(2)O(2)) and calcium- (Ca(2+)) induced stomatal closure. Promotes stomatal-closure-dependent drought-stress responses through its histone demethylase activity toward at least GOLS2 and RD20 loci, thus protecting them from silencing by removing H3K9me2 marks in drought conditions. Required for plant defenses leading to resistance against the virulent bacterial pathogen Pseudomonas syringae pv. tomato DC3000 (Pst DC3000) via a negative regulation of WRKY25 (a repressor of defense) and by triggering the expression of several pathogenesis-related (PR) proteins (e.g. PR1, PR3, PR4 and PR5). This is Lysine-specific demethylase JMJ27 from Arabidopsis thaliana (Mouse-ear cress).